A 451-amino-acid chain; its full sequence is MSDFFHSDVLSVSELNAFAKSLLENHLAGLWIAGEVSNLTRAASGHYYFSLKDSRAQVRCAMFKGAAVRLAKPLKEGDHIEVSGKISIYEARGEFQITVNEVRLKGLGQLYEAYERLKAQLQAEGAFAAERKKPLPVRPQCIGIVTSLAAAALRDVVTTLKRRAPEIPVIVYPTPVQGAGSELQIAQAIKTASQRAECDVLIVCRGGGSIEDLWAFNEEPVVRAIESCTVPVVSGVGHETDFTLADFVADMRAPTPTGAAELVSPNRQESLHRLAQAQCRLKTVLEQRYFDASQKLDWLARQIRHPRQKLDEQRASIGKLAQTLSYSMTQNVRTHTARFERQTQALKHCRPDVSVCKKNIDRFQTALSHAFHQLLTHRRQSLTAQAALLEAVSPQHILERGFSVVKNTRGQVIRNADVLKQGQKLHIIFADGETDVRVSKEQGQQDLFDCI.

It belongs to the XseA family. Heterooligomer composed of large and small subunits.

It is found in the cytoplasm. The enzyme catalyses Exonucleolytic cleavage in either 5'- to 3'- or 3'- to 5'-direction to yield nucleoside 5'-phosphates.. Bidirectionally degrades single-stranded DNA into large acid-insoluble oligonucleotides, which are then degraded further into small acid-soluble oligonucleotides. This chain is Exodeoxyribonuclease 7 large subunit, found in Neisseria meningitidis serogroup B (strain ATCC BAA-335 / MC58).